Here is a 358-residue protein sequence, read N- to C-terminus: Neuronal-specific septin-3 (358 aa).

Residues 1-10 (MSKGLPEART) show a composition bias toward basic and acidic residues. The interval 1–29 (MSKGLPEARTDTAMSELVPEPRPKPAVPM) is disordered. Residues 58–331 (TGFDFNIMVV…ETYRAKRLND (274 aa)) form the Septin-type G domain. Residues 68–75 (GQSGLGKS) are G1 motif. 68-75 (GQSGLGKS) contacts GTP. Residue Ser-91 is modified to Phosphoserine. Thr-102 is a GTP binding site. A G3 motif region spans residues 125–128 (DTPG). The tract at residues 207 to 210 (AKAD) is G4 motif. GTP is bound by residues 208 to 216 (KADTMTLEE), Gly-265, and Arg-280.

The protein belongs to the TRAFAC class TrmE-Era-EngA-EngB-Septin-like GTPase superfamily. Septin GTPase family. Septins polymerize into heterooligomeric protein complexes that form filaments, and can associate with cellular membranes, actin filaments and microtubules. GTPase activity is required for filament formation. Post-translationally, phosphorylated by PKG on serine residues. Phosphorylated by PKG on Ser-91. Brain-specific, with highest expression in the hippocampal CA3 region (at protein level).

It localises to the cytoplasm. The protein localises to the cytoskeleton. The protein resides in the synapse. In terms of biological role, filament-forming cytoskeletal GTPase. May play a role in cytokinesis (Potential). This Rattus norvegicus (Rat) protein is Neuronal-specific septin-3.